The following is a 369-amino-acid chain: Fructose-bisphosphate aldolase 2 (369 aa).

D40 contacts dihydroxyacetone phosphate. Residues S42 and T45 each contribute to the D-glyceraldehyde 3-phosphate site. R49 serves as a coordination point for beta-D-fructose 1,6-bisphosphate. K113 contacts D-glyceraldehyde 3-phosphate. A dihydroxyacetone phosphate-binding site is contributed by K152. E195 is a binding site for D-glyceraldehyde 3-phosphate. The Proton acceptor role is filled by E195. Positions 237, 279, and 280 each coordinate dihydroxyacetone phosphate. Residue K237 is the Schiff-base intermediate with dihydroxyacetone phosphate of the active site. Beta-D-fructose 1,6-bisphosphate is bound by residues S279 to G281 and S307. G309 and R310 together coordinate dihydroxyacetone phosphate. Position 310 (R310) interacts with beta-D-fructose 1,6-bisphosphate.

It belongs to the class I fructose-bisphosphate aldolase family.

The protein resides in the cytoplasm. It is found in the membrane. The protein localises to the host cell membrane. It carries out the reaction beta-D-fructose 1,6-bisphosphate = D-glyceraldehyde 3-phosphate + dihydroxyacetone phosphate. Its pathway is carbohydrate degradation; glycolysis; D-glyceraldehyde 3-phosphate and glycerone phosphate from D-glucose: step 4/4. Its function is as follows. Plays a key role in glycolysis by catalyzing the cleavage of fructose 1,6-bisphosphate into dihydroxyacetone phosphate and glyceraldehyde 3-phosphate. The chain is Fructose-bisphosphate aldolase 2 (ALDO2) from Plasmodium berghei (strain Anka).